A 459-amino-acid chain; its full sequence is uncharacterized protein (459 aa).

Residues 5–63 enclose the TRAM domain; it reads PVEEGQKFPLTIRRMGINGEGIGYFKKAVVFVPGAITGEEVVVEAVKVRDRFTEAKLNK. Residues Cys76, Cys82, Cys85, and Cys166 each coordinate [4Fe-4S] cluster. Residues Gln290, Tyr319, Asp340, and Asp388 each contribute to the S-adenosyl-L-methionine site. The active-site Nucleophile is the Cys415.

The protein belongs to the class I-like SAM-binding methyltransferase superfamily. RNA M5U methyltransferase family.

This is an uncharacterized protein from Listeria monocytogenes serotype 4b (strain F2365).